Here is a 509-residue protein sequence, read N- to C-terminus: Seipin-3 (509 aa).

A disordered region spans residues 33–73 (YDCLNSSPPANLRRRRLPMDTDSSSSSSTSSLESCEKRSTV). The span at 52–63 (DTDSSSSSSTSS) shows a compositional bias: low complexity. 2 consecutive transmembrane segments (helical) span residues 238 to 258 (LFCAVYVGIMLFALLVSAFMI) and 455 to 475 (LFVWISMSLFIMELLFALVFF).

Belongs to the seipin family. Expressed in seeds, seedlings, leaves, stems and roots. Not detected in flowers.

The protein resides in the endoplasmic reticulum membrane. Functionally, involved in lipid metabolism and lipid droplet (LD) morphology, number, and size. Supports the formation of small-sized LDs and modulates triacylglycerol accumulation. Induces probably a reorganization of the endoplasmic reticulum into LD-forming domains. In Arabidopsis thaliana (Mouse-ear cress), this protein is Seipin-3.